A 399-amino-acid polypeptide reads, in one-letter code: All trans-polyprenyl-diphosphate synthase PDSS2 (399 aa).

This sequence belongs to the FPP/GGPP synthase family. Heterotetramer composed of 2 PDSS1/DPS1 and 2 PDSS2/DLP1 subunits.

It is found in the mitochondrion. It catalyses the reaction 7 isopentenyl diphosphate + (2E,6E)-farnesyl diphosphate = all-trans-decaprenyl diphosphate + 7 diphosphate. The enzyme catalyses 6 isopentenyl diphosphate + (2E,6E)-farnesyl diphosphate = all-trans-nonaprenyl diphosphate + 6 diphosphate. The protein operates within cofactor biosynthesis; ubiquinone biosynthesis. Functionally, heterotetrameric enzyme that catalyzes the condensation of farnesyl diphosphate (FPP), which acts as a primer, and isopentenyl diphosphate (IPP) to produce prenyl diphosphates of varying chain lengths and participates in the determination of the side chain of ubiquinone. Supplies nona and decaprenyl diphosphate, the precursors for the side chain of the isoprenoid quinones ubiquinone-9 (Q9) and ubiquinone-10 (Q10) respectively. The enzyme adds isopentenyl diphosphate molecules sequentially to farnesyl diphosphate with trans stereochemistry. May play a role during cerebellar development. May regulate mitochondrial respiratory chain function. The polypeptide is All trans-polyprenyl-diphosphate synthase PDSS2 (Homo sapiens (Human)).